We begin with the raw amino-acid sequence, 103 residues long: Muscarinic toxin BM14 (103 aa).

A signal peptide spans Met-1–Thr-21. 5 disulfides stabilise this stretch: Cys-24–Cys-45, Cys-27–Cys-37, Cys-38–Cys-72, Cys-76–Cys-90, and Cys-91–Cys-96.

Belongs to the three-finger toxin family. Ancestral subfamily. Orphan group XVII sub-subfamily. As to expression, expressed by the venom gland.

It is found in the secreted. This toxin inhibits the binding of [3H]quinuclidinyl benzilate to the M2 muscarinic acetylcholine (mAchR) receptor subtype (CHRM2). This Bungarus multicinctus (Many-banded krait) protein is Muscarinic toxin BM14.